The following is a 335-amino-acid chain: Holliday junction branch migration complex subunit RuvB (335 aa).

Residues 4–184 (ADRLIQPTAL…FGIVQRLEFY (181 aa)) form a large ATPase domain (RuvB-L) region. ATP is bound by residues Ile-23, Arg-24, Gly-65, Lys-68, Thr-69, Thr-70, 131–133 (EDY), Arg-174, Tyr-184, and Arg-221. Thr-69 serves as a coordination point for Mg(2+). The segment at 185–255 (NIKDLTQIVK…VASAALDMLD (71 aa)) is small ATPAse domain (RuvB-S). A head domain (RuvB-H) region spans residues 258-335 (KEGFDYMDRK…LHFGYDYEPN (78 aa)). DNA-binding residues include Arg-294, Arg-313, and Arg-318.

The protein belongs to the RuvB family. Homohexamer. Forms an RuvA(8)-RuvB(12)-Holliday junction (HJ) complex. HJ DNA is sandwiched between 2 RuvA tetramers; dsDNA enters through RuvA and exits via RuvB. An RuvB hexamer assembles on each DNA strand where it exits the tetramer. Each RuvB hexamer is contacted by two RuvA subunits (via domain III) on 2 adjacent RuvB subunits; this complex drives branch migration. In the full resolvosome a probable DNA-RuvA(4)-RuvB(12)-RuvC(2) complex forms which resolves the HJ.

It is found in the cytoplasm. The enzyme catalyses ATP + H2O = ADP + phosphate + H(+). In terms of biological role, the RuvA-RuvB-RuvC complex processes Holliday junction (HJ) DNA during genetic recombination and DNA repair, while the RuvA-RuvB complex plays an important role in the rescue of blocked DNA replication forks via replication fork reversal (RFR). RuvA specifically binds to HJ cruciform DNA, conferring on it an open structure. The RuvB hexamer acts as an ATP-dependent pump, pulling dsDNA into and through the RuvAB complex. RuvB forms 2 homohexamers on either side of HJ DNA bound by 1 or 2 RuvA tetramers; 4 subunits per hexamer contact DNA at a time. Coordinated motions by a converter formed by DNA-disengaged RuvB subunits stimulates ATP hydrolysis and nucleotide exchange. Immobilization of the converter enables RuvB to convert the ATP-contained energy into a lever motion, pulling 2 nucleotides of DNA out of the RuvA tetramer per ATP hydrolyzed, thus driving DNA branch migration. The RuvB motors rotate together with the DNA substrate, which together with the progressing nucleotide cycle form the mechanistic basis for DNA recombination by continuous HJ branch migration. Branch migration allows RuvC to scan DNA until it finds its consensus sequence, where it cleaves and resolves cruciform DNA. The chain is Holliday junction branch migration complex subunit RuvB from Pseudoalteromonas atlantica (strain T6c / ATCC BAA-1087).